We begin with the raw amino-acid sequence, 526 residues long: Major facilitator superfamily domain-containing protein 4A (526 aa).

12 helical membrane passes run Leu-21–Ile-41, Ile-55–Phe-75, Leu-84–Cys-104, Leu-107–Ile-127, Val-142–Ala-162, Tyr-215–Val-235, Leu-297–Val-317, Gly-341–Leu-361, Gly-377–Ile-397, Cys-401–Leu-421, Val-430–Met-450, and Phe-458–Phe-478.

Belongs to the major facilitator superfamily.

The protein localises to the membrane. The chain is Major facilitator superfamily domain-containing protein 4A (mfsd4a) from Danio rerio (Zebrafish).